The following is an 89-amino-acid chain: Small ribosomal subunit protein uS17 (89 aa).

The protein belongs to the universal ribosomal protein uS17 family. In terms of assembly, part of the 30S ribosomal subunit.

Its function is as follows. One of the primary rRNA binding proteins, it binds specifically to the 5'-end of 16S ribosomal RNA. The polypeptide is Small ribosomal subunit protein uS17 (Acidovorax ebreus (strain TPSY) (Diaphorobacter sp. (strain TPSY))).